The sequence spans 83 residues: Small ribosomal subunit protein eS21 (83 aa).

At Met1 the chain carries N-acetylmethionine. Lys41 is covalently cross-linked (Glycyl lysine isopeptide (Lys-Gly) (interchain with G-Cter in SUMO2)).

It belongs to the eukaryotic ribosomal protein eS21 family. Component of the 40S small ribosomal subunit.

The protein localises to the cytoplasm. It localises to the cytosol. The protein resides in the rough endoplasmic reticulum. Component of the small ribosomal subunit. The ribosome is a large ribonucleoprotein complex responsible for the synthesis of proteins in the cell. This Oryctolagus cuniculus (Rabbit) protein is Small ribosomal subunit protein eS21 (RPS21).